The following is a 532-amino-acid chain: Membrane protein insertase YidC (532 aa).

5 helical membrane-spanning segments follow: residues phenylalanine 7–methionine 27, leucine 336–isoleucine 356, glycine 413–isoleucine 433, leucine 450–isoleucine 470, and proline 492–isoleucine 512.

This sequence belongs to the OXA1/ALB3/YidC family. Type 1 subfamily. In terms of assembly, interacts with the Sec translocase complex via SecD. Specifically interacts with transmembrane segments of nascent integral membrane proteins during membrane integration.

Its subcellular location is the cell membrane. Its function is as follows. Required for the insertion and/or proper folding and/or complex formation of integral membrane proteins into the membrane. Involved in integration of membrane proteins that insert both dependently and independently of the Sec translocase complex, as well as at least some lipoproteins. Aids folding of multispanning membrane proteins. This chain is Membrane protein insertase YidC, found in Buchnera aphidicola subsp. Acyrthosiphon pisum (strain APS) (Acyrthosiphon pisum symbiotic bacterium).